Reading from the N-terminus, the 228-residue chain is Carbonic anhydrase (228 aa).

Zn(2+) contacts are provided by C56, D58, H112, and C115.

The protein belongs to the beta-class carbonic anhydrase family. Zn(2+) serves as cofactor.

The catalysed reaction is hydrogencarbonate + H(+) = CO2 + H2O. Catalyzes the reversible hydration of CO(2) to H(2)CO(3). The main role may be to provide inorganic carbon for the bicarbonate-dependent carboxylation reactions catalyzed by pyruvate carboxylase, acetyl-CoA carboxylase and carbamoyl-phosphate synthetase. Involved in osmoadaptation. The polypeptide is Carbonic anhydrase (Emericella nidulans (strain FGSC A4 / ATCC 38163 / CBS 112.46 / NRRL 194 / M139) (Aspergillus nidulans)).